Consider the following 1093-residue polypeptide: Atos homolog protein A (1093 aa).

Residues 29–37 are transactivation domain 1 (TAD1); the sequence is ALLITEGRT. Disordered regions lie at residues 396–479, 558–579, and 746–788; these read AGRP…GNPL, SSKSKLKTPDTPISPRLDGESK, and HDNF…GSMR. Over residues 746–763 the composition is skewed to basic and acidic residues; that stretch reads HDNFKNKNRQDKTKAAHD. Positions 895-952 are required for macropage invasion; the sequence is LLGNFEESVLNFRLDPLGIVEGFTAEVGASGVFCPTHMTLPVEVSFYSVSDDNAPSPY. Residues 979 to 987 form a transactivation domain 2 (TAD2) region; it reads FNPNKTVVK.

Belongs to the ATOS family.

It is found in the nucleus. In terms of biological role, transcription regulator that syncronizes transcriptional and translational programs to promote macrophage invasion of tissues. This is Atos homolog protein A (ATOSA) from Gallus gallus (Chicken).